The primary structure comprises 512 residues: Probable cytochrome P450 6d2 (512 aa).

Cys457 lines the heme pocket.

It belongs to the cytochrome P450 family. Heme serves as cofactor.

Its subcellular location is the endoplasmic reticulum membrane. The protein localises to the microsome membrane. Its function is as follows. May be involved in the metabolism of insect hormones and in the breakdown of synthetic insecticides. This is Probable cytochrome P450 6d2 (Cyp6d2) from Drosophila melanogaster (Fruit fly).